Reading from the N-terminus, the 310-residue chain is N-acetyl-gamma-glutamyl-phosphate reductase (310 aa).

The active site involves Cys-117.

The protein belongs to the NAGSA dehydrogenase family. Type 2 subfamily.

It localises to the cytoplasm. It carries out the reaction N-acetyl-L-glutamate 5-semialdehyde + phosphate + NADP(+) = N-acetyl-L-glutamyl 5-phosphate + NADPH + H(+). Its pathway is amino-acid biosynthesis; L-arginine biosynthesis; N(2)-acetyl-L-ornithine from L-glutamate: step 3/4. Catalyzes the NADPH-dependent reduction of N-acetyl-5-glutamyl phosphate to yield N-acetyl-L-glutamate 5-semialdehyde. The protein is N-acetyl-gamma-glutamyl-phosphate reductase of Rhizobium johnstonii (strain DSM 114642 / LMG 32736 / 3841) (Rhizobium leguminosarum bv. viciae).